The primary structure comprises 715 residues: SEC14-like protein 1 (715 aa).

Positions 1–175 (MVQKYQSPVR…YLRQLEEEGI (175 aa)) constitute a PRELI/MSF1 domain. The required for interaction and inhibitory function toward RIGI stretch occupies residues 1 to 510 (MVQKYQSPVR…VPKSLYRTAE (510 aa)). Thr-234 carries the post-translational modification Phosphothreonine. The CRAL-TRIO domain occupies 319–495 (PPQVLQDYYA…FLSGECMCEV (177 aa)). In terms of domain architecture, GOLD spans 521–674 (TETIYQSASV…KCKVMYYTEV (154 aa)). Ser-586 bears the Phosphoserine mark.

Interacts with RIGI (via tandem CARD domain); the interaction is direct. Interacts (via GOLD domain) with SLC18A3; the interaction is direct. Interacts with SLC5A7 (via GOLD domain); the interaction is direct. In terms of tissue distribution, ubiquitous.

It is found in the cytoplasm. Its subcellular location is the golgi apparatus. Its function is as follows. May play a role in innate immunity by inhibiting the antiviral RIG-I signaling pathway. In this pathway, functions as a negative regulator of RIGI, the cytoplasmic sensor of viral nucleic acids. Prevents the interaction of RIGI with MAVS/IPS1, an important step in signal propagation. May also regulate the SLC18A3 and SLC5A7 cholinergic transporters. This is SEC14-like protein 1 (SEC14L1) from Homo sapiens (Human).